The chain runs to 719 residues: Polyribonucleotide nucleotidyltransferase (719 aa).

The Mg(2+) site is built by D487 and D493. The region spanning 554 to 613 is the KH domain; it reads PRIETFKIATDKIREVIGTGGKVIREIVEKTGAKVNIEDDGTVKVASSDGEAMKAAIKWI. The region spanning 623-691 is the S1 motif domain; sequence GQIYDGTVVK…DRGKTRLSMK (69 aa). Positions 691–719 are disordered; it reads KVVDQTTGEDLEAKQKDAPAEAPREAAGE. Basic and acidic residues predominate over residues 701-719; the sequence is LEAKQKDAPAEAPREAAGE.

The protein belongs to the polyribonucleotide nucleotidyltransferase family. Mg(2+) serves as cofactor.

It is found in the cytoplasm. The enzyme catalyses RNA(n+1) + phosphate = RNA(n) + a ribonucleoside 5'-diphosphate. Functionally, involved in mRNA degradation. Catalyzes the phosphorolysis of single-stranded polyribonucleotides processively in the 3'- to 5'-direction. This chain is Polyribonucleotide nucleotidyltransferase, found in Bradyrhizobium sp. (strain ORS 278).